Reading from the N-terminus, the 124-residue chain is uncharacterized protein (124 aa).

A helical transmembrane segment spans residues 2 to 22; the sequence is AIIIAIIAAVIVIAALITFNV. Residues 24–124 are disordered; sequence NASPGPEKQE…ALLSMKNKKK (101 aa). Basic and acidic residues-rich tracts occupy residues 30 to 58, 67 to 81, and 89 to 113; these read EKQEATDRIAPPEEEKNEAHYPAEARAAE, DSPKEKRDTMGDDIY, and KHSDEVHAEEEVTEESDKMQDRSYR.

It is found in the membrane. This is an uncharacterized protein from Bacillus subtilis (strain 168).